The following is a 298-amino-acid chain: Porphobilinogen deaminase (298 aa).

Cys242 is modified (S-(dipyrrolylmethanemethyl)cysteine).

The protein belongs to the HMBS family. As to quaternary structure, monomer. Dipyrromethane is required as a cofactor.

It catalyses the reaction 4 porphobilinogen + H2O = hydroxymethylbilane + 4 NH4(+). It functions in the pathway porphyrin-containing compound metabolism; protoporphyrin-IX biosynthesis; coproporphyrinogen-III from 5-aminolevulinate: step 2/4. Its function is as follows. Tetrapolymerization of the monopyrrole PBG into the hydroxymethylbilane pre-uroporphyrinogen in several discrete steps. The sequence is that of Porphobilinogen deaminase from Fusobacterium nucleatum subsp. nucleatum (strain ATCC 25586 / DSM 15643 / BCRC 10681 / CIP 101130 / JCM 8532 / KCTC 2640 / LMG 13131 / VPI 4355).